The following is a 271-amino-acid chain: Tryptophan synthase alpha chain (271 aa).

Catalysis depends on proton acceptor residues Glu-56 and Asp-67.

The protein belongs to the TrpA family. Tetramer of two alpha and two beta chains.

The enzyme catalyses (1S,2R)-1-C-(indol-3-yl)glycerol 3-phosphate + L-serine = D-glyceraldehyde 3-phosphate + L-tryptophan + H2O. Its pathway is amino-acid biosynthesis; L-tryptophan biosynthesis; L-tryptophan from chorismate: step 5/5. Functionally, the alpha subunit is responsible for the aldol cleavage of indoleglycerol phosphate to indole and glyceraldehyde 3-phosphate. This is Tryptophan synthase alpha chain from Mycolicibacterium paratuberculosis (strain ATCC BAA-968 / K-10) (Mycobacterium paratuberculosis).